Here is a 216-residue protein sequence, read N- to C-terminus: Probable GTP-binding protein EngB (216 aa).

The EngB-type G domain occupies Asp30–Leu204. GTP contacts are provided by residues Gly38 to Ser45, Gly64 to Leu68, Asp82 to Gly85, Thr149 to Asp152, and Leu182 to Ala185. 2 residues coordinate Mg(2+): Ser45 and Thr66.

The protein belongs to the TRAFAC class TrmE-Era-EngA-EngB-Septin-like GTPase superfamily. EngB GTPase family. Requires Mg(2+) as cofactor.

In terms of biological role, necessary for normal cell division and for the maintenance of normal septation. The chain is Probable GTP-binding protein EngB from Azotobacter vinelandii (strain DJ / ATCC BAA-1303).